Consider the following 804-residue polypeptide: E3 UFM1-protein ligase 1 homolog (804 aa).

Methionine 1 carries the N-acetylmethionine modification. The disordered stretch occupies residues 397–483 (IHPSSKSSES…VKAQESNNII (87 aa)). Positions 400–409 (SSKSSESTES) are enriched in low complexity. Residues 463-475 (LDSKAGGKKESVK) show a composition bias toward basic and acidic residues.

This sequence belongs to the UFL1 family.

E3 UFM1-protein ligase that mediates ufmylation of target proteins. The sequence is that of E3 UFM1-protein ligase 1 homolog from Arabidopsis thaliana (Mouse-ear cress).